The following is a 296-amino-acid chain: Probable endonuclease 4 (296 aa).

Positions 68, 109, 144, 178, 181, 213, 226, 228, and 258 each coordinate Zn(2+).

This sequence belongs to the AP endonuclease 2 family. The cofactor is Zn(2+).

It catalyses the reaction Endonucleolytic cleavage to 5'-phosphooligonucleotide end-products.. In terms of biological role, endonuclease IV plays a role in DNA repair. It cleaves phosphodiester bonds at apurinic or apyrimidinic (AP) sites, generating a 3'-hydroxyl group and a 5'-terminal sugar phosphate. The chain is Probable endonuclease 4 from Staphylococcus aureus (strain MRSA252).